A 156-amino-acid polypeptide reads, in one-letter code: MTDVLLCVGNSMMGDDGAGPLLAEKCAAAPKGNWVVIDGGSAPENDIVAIRELRPTRLLIVDATDMGLNPGEIRIIDPDDIAEMFMMTTHNMPLNYLIDQLKEDIGEVIFLGIQPDIVGFYYPMTQPIKDAVETVYQRLEGWEGNGGFAQLAVEEE.

3 residues coordinate Ni(2+): Asp-16, Asp-62, and His-90.

It belongs to the peptidase A31 family. In terms of assembly, monomer.

The catalysed reaction is This enzyme specifically removes a 32-amino acid peptide from the C-terminus of the precursor of the large subunit of E.coli hydrogenase 3 by cleavage at the C-terminal side of Arg-537.. In terms of biological role, protease involved in the C-terminal processing of HycE, the large subunit of hydrogenase 3. The polypeptide is Hydrogenase 3 maturation protease (hycI) (Escherichia coli O157:H7).